The sequence spans 350 residues: MKSLLACLALMIAGIATALFIGFHDHTGNKKIVYDDDQEGLQDQIVFKFSHVVAENTPKGLAANKFADLVNEKSGGKIKIEVFPNGSLYSDIEEIEALQNGDVQFIAPSTSKLGMLSPEWGVLDLPYAFTDYNAVKKGLNGSIGTQLFDSLKKNQLKGLAYWTNGFKQITTNQGPVKTPDDLKGQDLRIMQSDVIEDQFKLLGATPHQESFNSTFQLLENNVVDGEENTISNIYSKKFYNVQDYLTISSHGYLGYAVMTDEHFWKAQTPETRRILTEAMKETTEWNETYAEQMNKEQLEEIKKNSAIHIYELSDKEKQEWMKRLDPVYRQYEPIFGRELIRELLELRKDS.

The first 18 residues, 1–18 (MKSLLACLALMIAGIATA), serve as a signal peptide directing secretion.

It belongs to the bacterial solute-binding protein 7 family.

It is found in the secreted. Part of the binding-protein-dependent transport system for uptake of C4-dicarboxylates. Responsible for growth on fumarate and succinate but not malate. Is not directly involved in C4-dicarboxylate uptake, but plays a sensory role in the DctS/DctR two-component system which regulates the expression of the dctA C4-dicarboxylate transporter. This Bacillus subtilis (strain 168) protein is C4-dicarboxylate-binding protein DctB (dctB).